A 159-amino-acid chain; its full sequence is Putative ribosomal RNA large subunit methyltransferase H (159 aa).

S-adenosyl-L-methionine-binding positions include Leu-76, Gly-108, and 127–132; that span reads LSAMTF.

Belongs to the RNA methyltransferase RlmH family.

The protein resides in the cytoplasm. The catalysed reaction is pseudouridine(1915) in 23S rRNA + S-adenosyl-L-methionine = N(3)-methylpseudouridine(1915) in 23S rRNA + S-adenosyl-L-homocysteine + H(+). Its function is as follows. Specifically methylates the pseudouridine at position 1915 (m3Psi1915) in 23S rRNA. The chain is Putative ribosomal RNA large subunit methyltransferase H from Methanospirillum hungatei JF-1 (strain ATCC 27890 / DSM 864 / NBRC 100397 / JF-1).